Consider the following 363-residue polypeptide: Phosphoserine aminotransferase (363 aa).

Residue arginine 42 participates in L-glutamate binding. Residues 76–77, tryptophan 102, threonine 156, aspartate 175, and glutamine 198 each bind pyridoxal 5'-phosphate; that span reads GR. N6-(pyridoxal phosphate)lysine is present on lysine 199. 240 to 241 contacts pyridoxal 5'-phosphate; the sequence is NT.

It belongs to the class-V pyridoxal-phosphate-dependent aminotransferase family. SerC subfamily. As to quaternary structure, homodimer. Pyridoxal 5'-phosphate serves as cofactor.

The protein localises to the cytoplasm. It carries out the reaction O-phospho-L-serine + 2-oxoglutarate = 3-phosphooxypyruvate + L-glutamate. The enzyme catalyses 4-(phosphooxy)-L-threonine + 2-oxoglutarate = (R)-3-hydroxy-2-oxo-4-phosphooxybutanoate + L-glutamate. It functions in the pathway amino-acid biosynthesis; L-serine biosynthesis; L-serine from 3-phospho-D-glycerate: step 2/3. The protein operates within cofactor biosynthesis; pyridoxine 5'-phosphate biosynthesis; pyridoxine 5'-phosphate from D-erythrose 4-phosphate: step 3/5. In terms of biological role, catalyzes the reversible conversion of 3-phosphohydroxypyruvate to phosphoserine and of 3-hydroxy-2-oxo-4-phosphonooxybutanoate to phosphohydroxythreonine. This chain is Phosphoserine aminotransferase, found in Shewanella halifaxensis (strain HAW-EB4).